Here is a 209-residue protein sequence, read N- to C-terminus: Uracil phosphoribosyltransferase (209 aa).

5-phospho-alpha-D-ribose 1-diphosphate contacts are provided by residues Arg-79, Arg-104, and 131-139 (DPMLATGAS). Residues Ile-194 and 199-201 (GDA) each bind uracil. Position 200 (Asp-200) interacts with 5-phospho-alpha-D-ribose 1-diphosphate.

This sequence belongs to the UPRTase family. It depends on Mg(2+) as a cofactor.

It catalyses the reaction UMP + diphosphate = 5-phospho-alpha-D-ribose 1-diphosphate + uracil. It participates in pyrimidine metabolism; UMP biosynthesis via salvage pathway; UMP from uracil: step 1/1. Its activity is regulated as follows. Allosterically activated by GTP. Functionally, catalyzes the conversion of uracil and 5-phospho-alpha-D-ribose 1-diphosphate (PRPP) to UMP and diphosphate. The polypeptide is Uracil phosphoribosyltransferase (Staphylococcus haemolyticus (strain JCSC1435)).